A 62-amino-acid polypeptide reads, in one-letter code: MSTQLDPTQLAIEFLRRDQSNLSPAQYLKRLKQLELEFADLLTLSSAELKEEIYFAWRLGVH.

This is an uncharacterized protein from Escherichia coli O157:H7.